A 111-amino-acid chain; its full sequence is Flagellar hook-basal body complex protein FliE (111 aa).

Belongs to the FliE family.

Its subcellular location is the bacterial flagellum basal body. The protein is Flagellar hook-basal body complex protein FliE of Clostridium acetobutylicum (strain ATCC 824 / DSM 792 / JCM 1419 / IAM 19013 / LMG 5710 / NBRC 13948 / NRRL B-527 / VKM B-1787 / 2291 / W).